Here is a 302-residue protein sequence, read N- to C-terminus: Protein transport protein SEC13 homolog B (302 aa).

WD repeat units follow at residues 9-48, 54-95, 101-142, 148-201, 208-251, and 257-296; these read GHED…GSQQ, GHRG…QWTQ, DHKS…GWDT, AHPV…WKMD, KHTD…EQWE, and DFMT…EWEQ.

Belongs to the WD repeat SEC13 family. As to quaternary structure, part of the nuclear pore complex (NPC). The NPC has an eight-fold symmetrical structure comprising a central transport channel and two rings, the cytoplasmic and nuclear rings, to which eight filaments are attached. The cytoplasmic filaments have loose ends, while the nuclear filaments are joined in a distal ring, forming a nuclear basket. NPCs are highly dynamic in configuration and composition, and can be devided in 3 subcomplexes, the NUP62 subcomplex, the NUP107-160 subcomplex and the NUP93 subcomplex, containing approximately 30 different nucleoporin proteins. Interacts with MAG5, SEC31A and SEC31B.

Its subcellular location is the golgi apparatus. It is found in the endoplasmic reticulum. The protein resides in the nucleus envelope. The protein localises to the nucleus. It localises to the nuclear pore complex. Its function is as follows. Required for protein transport from the endoplasmic reticulum to the Golgi apparatus. This is Protein transport protein SEC13 homolog B from Arabidopsis thaliana (Mouse-ear cress).